A 257-amino-acid polypeptide reads, in one-letter code: UPF0246 protein YaaA (257 aa).

Belongs to the UPF0246 family.

The chain is UPF0246 protein YaaA from Salmonella agona (strain SL483).